The following is a 124-amino-acid chain: Small ribosomal subunit protein uS12 (124 aa).

Asp89 is modified (3-methylthioaspartic acid).

This sequence belongs to the universal ribosomal protein uS12 family. In terms of assembly, part of the 30S ribosomal subunit. Contacts proteins S8 and S17. May interact with IF1 in the 30S initiation complex.

With S4 and S5 plays an important role in translational accuracy. In terms of biological role, interacts with and stabilizes bases of the 16S rRNA that are involved in tRNA selection in the A site and with the mRNA backbone. Located at the interface of the 30S and 50S subunits, it traverses the body of the 30S subunit contacting proteins on the other side and probably holding the rRNA structure together. The combined cluster of proteins S8, S12 and S17 appears to hold together the shoulder and platform of the 30S subunit. This is Small ribosomal subunit protein uS12 from Tolumonas auensis (strain DSM 9187 / NBRC 110442 / TA 4).